We begin with the raw amino-acid sequence, 121 residues long: UPF0102 protein HRM2_30940 (121 aa).

It belongs to the UPF0102 family.

In Desulforapulum autotrophicum (strain ATCC 43914 / DSM 3382 / VKM B-1955 / HRM2) (Desulfobacterium autotrophicum), this protein is UPF0102 protein HRM2_30940.